The primary structure comprises 435 residues: Trigger factor (435 aa).

A PPIase FKBP-type domain is found at 163–248 (GDTVTIDFDG…IHEIKTKELP (86 aa)).

The protein belongs to the FKBP-type PPIase family. Tig subfamily.

Its subcellular location is the cytoplasm. The enzyme catalyses [protein]-peptidylproline (omega=180) = [protein]-peptidylproline (omega=0). Its function is as follows. Involved in protein export. Acts as a chaperone by maintaining the newly synthesized protein in an open conformation. Functions as a peptidyl-prolyl cis-trans isomerase. The sequence is that of Trigger factor from Pediococcus pentosaceus (strain ATCC 25745 / CCUG 21536 / LMG 10740 / 183-1w).